A 65-amino-acid polypeptide reads, in one-letter code: Large ribosomal subunit protein bL35 (65 aa).

The segment at Met-1–Phe-28 is disordered. Basic residues predominate over residues Ala-10–Lys-26.

The protein belongs to the bacterial ribosomal protein bL35 family.

The sequence is that of Large ribosomal subunit protein bL35 from Syntrophotalea carbinolica (strain DSM 2380 / NBRC 103641 / GraBd1) (Pelobacter carbinolicus).